A 620-amino-acid polypeptide reads, in one-letter code: Probable potassium transport system protein Kup (620 aa).

The next 12 membrane-spanning stretches (helical) occupy residues Leu11–Phe31, Ile51–Val71, Ile100–Pro120, Leu138–Ala158, Phe167–Ile187, Ala202–Leu222, Trp246–Leu266, Leu288–Phe308, Gly334–Leu354, Ala364–Val384, Val396–Thr416, and Leu418–Ile438.

It belongs to the HAK/KUP transporter (TC 2.A.72) family.

It is found in the cell inner membrane. It carries out the reaction K(+)(in) + H(+)(in) = K(+)(out) + H(+)(out). In terms of biological role, transport of potassium into the cell. Likely operates as a K(+):H(+) symporter. The sequence is that of Probable potassium transport system protein Kup from Vibrio cholerae serotype O1 (strain ATCC 39315 / El Tor Inaba N16961).